The following is a 350-amino-acid chain: fMet-Leu-Phe receptor (350 aa).

Over 1 to 27 (METNSSLPTNISGGTPAVSAGYLFLDI) the chain is Extracellular. N-linked (GlcNAc...) asparagine glycans are attached at residues asparagine 4 and asparagine 10. The chain crosses the membrane as a helical span at residues 28-50 (ITYLVFAVTFVLGVLGNGLVIWV). Residues 51–61 (AGFRMTHTVTT) are Cytoplasmic-facing. Residues 62–83 (ISYLNLAVADFCFTSTLPFFMV) traverse the membrane as a helical segment. At 84 to 100 (RKAMGGHWPFGWFLCKF) the chain is on the extracellular side. Residues cysteine 98 and cysteine 176 are joined by a disulfide bond. The helical transmembrane segment at 101–121 (VFTIVDINLFGSVFLIALIAL) threads the bilayer. Residues 122–140 (DRCVCVLHPVWTQNHRTVS) are Cytoplasmic-facing. The chain crosses the membrane as a helical span at residues 141–162 (LAKKVIIGPWVMALLLTLPVII). Residues 163 to 205 (RVTTVPGKTGTVACTFNFSPWTNDPKERINVAVAMLTVRGIIR) are Extracellular-facing. A helical membrane pass occupies residues 206 to 226 (FIIGFSAPMSIVAVSYGLIAT). The Cytoplasmic segment spans residues 227-242 (KIHKQGLIKSSRPLRV). A helical transmembrane segment spans residues 243 to 266 (LSFVAAAFFLCWSPYQVVALIATV). Residues 267–285 (RIRELLQGMYKEIGIAVDV) are Extracellular-facing. The helical transmembrane segment at 286–305 (TSALAFFNSCLNPMLYVFMG) threads the bilayer. Residues 306 to 350 (QDFRERLIHALPASLERALTEDSTQTSDTATNSTLPSAEVELQAK) are Cytoplasmic-facing. Residues 325-350 (TEDSTQTSDTATNSTLPSAEVELQAK) are disordered. A compositionally biased stretch (polar residues) spans 326 to 341 (EDSTQTSDTATNSTLP). Serine 328 carries the post-translational modification Phosphoserine. A phosphothreonine mark is found at threonine 329 and threonine 331. Serine 332 carries the post-translational modification Phosphoserine. Threonine 334 and threonine 336 each carry phosphothreonine. At serine 338 the chain carries Phosphoserine. Threonine 339 carries the phosphothreonine modification.

Belongs to the G-protein coupled receptor 1 family. In terms of assembly, interacts with S.aureus chemotaxis inhibitory protein (CHIPS); the interaction blocks the receptor and may thus inhibit the immune response. In terms of processing, phosphorylated; which is necessary for desensitization. As to expression, neutrophils.

It localises to the cell membrane. Functionally, high affinity receptor for N-formyl-methionyl peptides (fMLP), which are powerful neutrophil chemotactic factors. Binding of fMLP to the receptor stimulates intracellular calcium mobilization and superoxide anion release. This response is mediated via a G-protein that activates a phosphatidylinositol-calcium second messenger system. Receptor for TAFA4, mediates its effects on chemoattracting macrophages, promoting phagocytosis and increasing ROS release. Receptor for cathepsin CTSG, leading to increased phagocyte chemotaxis. This Homo sapiens (Human) protein is fMet-Leu-Phe receptor (FPR1).